The following is a 342-amino-acid chain: MQEPSEDQATSDELSFVHDAVLLQEAVAAVLGVKALPKQTDDESQNSLQASGIYVDATFGRGGHSRLLLSQLADDATLIVFDKDPTAISVARELANSDSRVKVVHDSFATLTDSLAAMRITQVDGLMADLGISSPQIDDGSRGFSFMRDGAVDMRMDTSRGQSVAEWLETVDDETLANVLYEFGEERHSRRIARAIKQMDSYDSTLALAEVIKVAHPNWQRGKHPATQSFQAMRIFINNELGDVDNFLEQSIPILKVGGQLAVISFHSLEDRRIKQFLQRHSKGQYPEDENLPMPPKRPRYFSKPKRVGPSKAEISHNPRSRSAWLRMATRTDADYVADIHP.

Residues 62–64 (GGH), aspartate 82, phenylalanine 108, aspartate 129, and glutamine 136 each bind S-adenosyl-L-methionine. The disordered stretch occupies residues 280–319 (RHSKGQYPEDENLPMPPKRPRYFSKPKRVGPSKAEISHNP). A compositionally biased stretch (basic residues) spans 297–309 (KRPRYFSKPKRVG).

It belongs to the methyltransferase superfamily. RsmH family.

The protein localises to the cytoplasm. The catalysed reaction is cytidine(1402) in 16S rRNA + S-adenosyl-L-methionine = N(4)-methylcytidine(1402) in 16S rRNA + S-adenosyl-L-homocysteine + H(+). Functionally, specifically methylates the N4 position of cytidine in position 1402 (C1402) of 16S rRNA. This chain is Ribosomal RNA small subunit methyltransferase H, found in Psychrobacter cryohalolentis (strain ATCC BAA-1226 / DSM 17306 / VKM B-2378 / K5).